A 143-amino-acid chain; its full sequence is Histone H2AX (143 aa).

The disordered stretch occupies residues 1–22 (MSGRGKTGGKARAKAKSRSSRA). At Ser2 the chain carries N-acetylserine. Position 2 is a phosphoserine (Ser2). Lys6 and Lys10 each carry N6-acetyllysine. Residues 7–19 (TGGKARAKAKSRS) show a composition bias toward basic residues. Lys10 carries the post-translational modification N6-lactoyllysine; alternate. Residues Lys14 and Lys16 each participate in a glycyl lysine isopeptide (Lys-Gly) (interchain with G-Cter in ubiquitin) cross-link. An N6-acetyllysine modification is found at Lys37. Lys120 is covalently cross-linked (Glycyl lysine isopeptide (Lys-Gly) (interchain with G-Cter in ubiquitin)). The interval 121–143 (TSATVGPKAPSGGKKATQASQEY) is disordered. Ser122 is subject to Phosphoserine. Glycyl lysine isopeptide (Lys-Gly) (interchain with G-Cter in SUMO2) cross-links involve residues Lys128 and Lys135. Phosphoserine; by ATM, ATR and PRKDC is present on Ser140. The [ST]-Q motif motif lies at 140–141 (SQ). Tyr143 is modified (phosphotyrosine; by WSTF).

The protein belongs to the histone H2A family. As to quaternary structure, the nucleosome is a histone octamer containing two molecules each of H2A, H2B, H3 and H4 assembled in one H3-H4 heterotetramer and two H2A-H2B heterodimers. The octamer wraps approximately 147 bp of DNA. Interacts with numerous proteins required for DNA damage signaling and repair when phosphorylated on Ser-140. These include MDC1, TP53BP1, BRCA1 and the MRN complex, composed of MRE11, RAD50, and NBN. Interaction with the MRN complex is mediated at least in part by NBN. Also interacts with DHX9/NDHII when phosphorylated on Ser-140 and MCPH1 when phosphorylated at Ser-140 or Tyr-143. Interacts with ARRB2; the interaction is detected in the nucleus upon OR1D2 stimulation. Interacts with WRAP53/TCAB1. Interacts with HDGFL2. Interacts with DNA damage up-regulated protein DDUP. Forms a complex with DDUP and RAD18 following DDUP phosphorylation. In terms of assembly, (Microbial infection) Interacts with Epstein-Barr virus protein EBNA6. Post-translationally, phosphorylated by VRK1. Phosphorylated on Ser-140 (to form gamma-H2AX or H2AX139ph) in response to DNA double strand breaks (DSBs) generated by exogenous genotoxic agents and by stalled replication forks, and may also occur during meiotic recombination events and immunoglobulin class switching in lymphocytes. Phosphorylation can extend up to several thousand nucleosomes from the actual site of the DSB and may mark the surrounding chromatin for recruitment of proteins required for DNA damage signaling and repair. Widespread phosphorylation may also serve to amplify the damage signal or aid repair of persistent lesions. Phosphorylation of Ser-140 (H2AX139ph) in response to ionizing radiation is mediated by both ATM and PRKDC while defects in DNA replication induce Ser-140 phosphorylation (H2AX139ph) subsequent to activation of ATR and PRKDC. Dephosphorylation of Ser-140 by PP2A is required for DNA DSB repair. In meiosis, Ser-140 phosphorylation (H2AX139ph) may occur at synaptonemal complexes during leptotene as an ATM-dependent response to the formation of programmed DSBs by SPO11. Ser-140 phosphorylation (H2AX139ph) may subsequently occurs at unsynapsed regions of both autosomes and the XY bivalent during zygotene, downstream of ATR and BRCA1 activation. Ser-140 phosphorylation (H2AX139ph) may also be required for transcriptional repression of unsynapsed chromatin and meiotic sex chromosome inactivation (MSCI), whereby the X and Y chromosomes condense in pachytene to form the heterochromatic XY-body. During immunoglobulin class switch recombination in lymphocytes, Ser-140 phosphorylation (H2AX139ph) may occur at sites of DNA-recombination subsequent to activation of the activation-induced cytidine deaminase AICDA. Phosphorylation at Tyr-143 (H2AXY142ph) by BAZ1B/WSTF determines the relative recruitment of either DNA repair or pro-apoptotic factors. Phosphorylation at Tyr-143 (H2AXY142ph) favors the recruitment of APBB1/FE65 and pro-apoptosis factors such as MAPK8/JNK1, triggering apoptosis. In contrast, dephosphorylation of Tyr-143 by EYA proteins (EYA1, EYA2, EYA3 or EYA4) favors the recruitment of MDC1-containing DNA repair complexes to the tail of phosphorylated Ser-140 (H2AX139ph). In terms of processing, monoubiquitination of Lys-120 (H2AXK119ub) by RING1 and RNF2/RING2 complex gives a specific tag for epigenetic transcriptional repression. Following DNA double-strand breaks (DSBs), it is ubiquitinated through 'Lys-63' linkage of ubiquitin moieties by the E2 ligase UBE2N and the E3 ligases RNF8 and RNF168, leading to the recruitment of repair proteins to sites of DNA damage. Ubiquitination at Lys-14 and Lys-16 (H2AK13Ub and H2AK15Ub, respectively) in response to DNA damage is initiated by RNF168 that mediates monoubiquitination at these 2 sites, and 'Lys-63'-linked ubiquitin are then conjugated to monoubiquitin; RNF8 is able to extend 'Lys-63'-linked ubiquitin chains in vitro. H2AK119Ub and ionizing radiation-induced 'Lys-63'-linked ubiquitination (H2AK13Ub and H2AK15Ub) are distinct events. Acetylation at Lys-6 (H2AXK5ac) by KAT5 component of the NuA4 histone acetyltransferase complex promotes NBN/NBS1 assembly at the sites of DNA damage. Acetylation at Lys-37 increases in S and G2 phases. This modification has been proposed to play a role in DNA double-strand break repair.

The protein resides in the nucleus. Its subcellular location is the chromosome. Variant histone H2A which replaces conventional H2A in a subset of nucleosomes. Nucleosomes wrap and compact DNA into chromatin, limiting DNA accessibility to the cellular machineries which require DNA as a template. Histones thereby play a central role in transcription regulation, DNA repair, DNA replication and chromosomal stability. DNA accessibility is regulated via a complex set of post-translational modifications of histones, also called histone code, and nucleosome remodeling. Required for checkpoint-mediated arrest of cell cycle progression in response to low doses of ionizing radiation and for efficient repair of DNA double strand breaks (DSBs) specifically when modified by C-terminal phosphorylation. In Homo sapiens (Human), this protein is Histone H2AX.